The following is a 261-amino-acid chain: 6-carboxyhexanoate--CoA ligase (261 aa).

It belongs to the BioW family. As to quaternary structure, homodimer. Requires Mg(2+) as cofactor.

The enzyme catalyses heptanedioate + ATP + CoA = 6-carboxyhexanoyl-CoA + AMP + diphosphate. Its pathway is metabolic intermediate metabolism; pimeloyl-CoA biosynthesis; pimeloyl-CoA from pimelate: step 1/1. In terms of biological role, catalyzes the transformation of pimelate into pimeloyl-CoA with concomitant hydrolysis of ATP to AMP. The polypeptide is 6-carboxyhexanoate--CoA ligase (Bacillus licheniformis (strain ATCC 14580 / DSM 13 / JCM 2505 / CCUG 7422 / NBRC 12200 / NCIMB 9375 / NCTC 10341 / NRRL NRS-1264 / Gibson 46)).